The primary structure comprises 142 residues: Large ribosomal subunit protein uL13 (142 aa).

Belongs to the universal ribosomal protein uL13 family. In terms of assembly, part of the 50S ribosomal subunit.

In terms of biological role, this protein is one of the early assembly proteins of the 50S ribosomal subunit, although it is not seen to bind rRNA by itself. It is important during the early stages of 50S assembly. This Alkaliphilus metalliredigens (strain QYMF) protein is Large ribosomal subunit protein uL13.